The chain runs to 131 residues: Olfactory receptor-like protein COR9 (131 aa).

Residues 1–16 (VAICSPLLYSTVMTKR) lie on the Cytoplasmic side of the membrane. The helical transmembrane segment at 17-41 (VCMQLVVGSYMGGLLNSLTHTCGLL) threads the bilayer. Residues 42–82 (GLPFCGPNVINHYFCDIPPLLQLACSDTHRNETLLLAFSAV) lie on the Extracellular side of the membrane. N-linked (GlcNAc...) asparagine glycosylation occurs at asparagine 72. A helical transmembrane segment spans residues 83 to 103 (IALFTLFVITASYMLILSVIL). Residues 104-116 (KIQSDDGRKKTFH) are Cytoplasmic-facing. The chain crosses the membrane as a helical span at residues 117 to 131 (TCASHLTAITIFFGS).

The protein belongs to the G-protein coupled receptor 1 family.

Its subcellular location is the cell membrane. In terms of biological role, odorant receptor. In Gallus gallus (Chicken), this protein is Olfactory receptor-like protein COR9 (COR9).